We begin with the raw amino-acid sequence, 337 residues long: Fructose-1,6-bisphosphatase class 1 (337 aa).

Mg(2+)-binding residues include Glu89, Asp112, Leu114, and Asp115. Residues 115 to 118, Asn208, Tyr241, and Lys271 contribute to the substrate site; that span reads DGSS. Glu277 contacts Mg(2+).

This sequence belongs to the FBPase class 1 family. In terms of assembly, homotetramer. Mg(2+) serves as cofactor.

It localises to the cytoplasm. It carries out the reaction beta-D-fructose 1,6-bisphosphate + H2O = beta-D-fructose 6-phosphate + phosphate. It participates in carbohydrate biosynthesis; gluconeogenesis. The protein is Fructose-1,6-bisphosphatase class 1 of Yersinia enterocolitica serotype O:8 / biotype 1B (strain NCTC 13174 / 8081).